Consider the following 231-residue polypeptide: MRGKSAVLLSLIMLIAGFLISFSFQMTKENNKSAAETEEWKKEYALRDELLKQEKENKKFEKELYQKQNKVRQAENKLKKEKSEYYNVLEDTEKYRMYIGEVGVQGEGVEVTLEDASYIPEGENVNSYIVHESHIFQVVNELYISGAAAVAVNGQRLTHDSYIKCNGPVVTVDGVQHPAPFTVSAIGDPDVLLPSLNIAGGLIDQLSMDHISVSAEKEKNVQMKPILKTKE.

The signal sequence occupies residues 1–34 (MRGKSAVLLSLIMLIAGFLISFSFQMTKENNKSA). Positions 44–94 (YALRDELLKQEKENKKFEKELYQKQNKVRQAENKLKKEKSEYYNVLEDTEK) form a coiled coil.

Belongs to the UPF0749 family.

May be involved in cell division and sporulation. The polypeptide is UPF0749 protein YlxW (ylxW) (Bacillus subtilis (strain 168)).